The chain runs to 343 residues: 3-isopropylmalate dehydrogenase (343 aa).

Substrate contacts are provided by arginine 94, arginine 104, arginine 128, and aspartate 218. 3 residues coordinate Mg(2+): aspartate 218, aspartate 242, and aspartate 246. 278-290 (GSAPDIAGQNKAN) provides a ligand contact to NAD(+).

Belongs to the isocitrate and isopropylmalate dehydrogenases family. LeuB type 2 subfamily. In terms of assembly, homodimer. Mg(2+) is required as a cofactor. Mn(2+) serves as cofactor.

It localises to the cytoplasm. It carries out the reaction (2R,3S)-3-isopropylmalate + NAD(+) = 4-methyl-2-oxopentanoate + CO2 + NADH. The protein operates within amino-acid biosynthesis; L-leucine biosynthesis; L-leucine from 3-methyl-2-oxobutanoate: step 3/4. Functionally, catalyzes the oxidation of 3-carboxy-2-hydroxy-4-methylpentanoate (3-isopropylmalate) to 3-carboxy-4-methyl-2-oxopentanoate. The product decarboxylates to 4-methyl-2 oxopentanoate. This chain is 3-isopropylmalate dehydrogenase, found in Bifidobacterium longum (strain DJO10A).